Here is a 137-residue protein sequence, read N- to C-terminus: Fluoride-specific ion channel FluC 1 (137 aa).

4 helical membrane-spanning segments follow: residues 4–24 (LIYI…YYLG), 37–57 (LATL…TTYI), 67–87 (VITG…TLSV), and 98–118 (WGIA…MSGL). Na(+) is bound by residues Gly77 and Thr80.

This sequence belongs to the fluoride channel Fluc/FEX (TC 1.A.43) family.

Its subcellular location is the cell membrane. It catalyses the reaction fluoride(in) = fluoride(out). With respect to regulation, na(+) is not transported, but it plays an essential structural role and its presence is essential for fluoride channel function. Functionally, fluoride-specific ion channel. Important for reducing fluoride concentration in the cell, thus reducing its toxicity. The chain is Fluoride-specific ion channel FluC 1 from Bacillus anthracis.